Here is a 602-residue protein sequence, read N- to C-terminus: Elongation factor 4 (602 aa).

The tr-type G domain maps to 7-189 (SKIRNFCIIA…AIVRRVPPPQ (183 aa)). GTP-binding positions include 19-24 (DHGKST) and 136-139 (NKVD).

It belongs to the TRAFAC class translation factor GTPase superfamily. Classic translation factor GTPase family. LepA subfamily.

It is found in the cell inner membrane. It catalyses the reaction GTP + H2O = GDP + phosphate + H(+). Required for accurate and efficient protein synthesis under certain stress conditions. May act as a fidelity factor of the translation reaction, by catalyzing a one-codon backward translocation of tRNAs on improperly translocated ribosomes. Back-translocation proceeds from a post-translocation (POST) complex to a pre-translocation (PRE) complex, thus giving elongation factor G a second chance to translocate the tRNAs correctly. Binds to ribosomes in a GTP-dependent manner. This Prochlorococcus marinus (strain MIT 9215) protein is Elongation factor 4.